Here is a 418-residue protein sequence, read N- to C-terminus: Histidinol dehydrogenase (418 aa).

The NAD(+) site is built by Y119, Q180, and N203. Substrate contacts are provided by T226, Q248, and H251. 2 residues coordinate Zn(2+): Q248 and H251. Catalysis depends on proton acceptor residues E316 and H317. Substrate-binding residues include H317, D350, E404, and H409. Position 350 (D350) interacts with Zn(2+). H409 contacts Zn(2+).

This sequence belongs to the histidinol dehydrogenase family. The cofactor is Zn(2+).

It carries out the reaction L-histidinol + 2 NAD(+) + H2O = L-histidine + 2 NADH + 3 H(+). The protein operates within amino-acid biosynthesis; L-histidine biosynthesis; L-histidine from 5-phospho-alpha-D-ribose 1-diphosphate: step 9/9. Its function is as follows. Catalyzes the sequential NAD-dependent oxidations of L-histidinol to L-histidinaldehyde and then to L-histidine. The protein is Histidinol dehydrogenase of Staphylococcus aureus (strain MSSA476).